We begin with the raw amino-acid sequence, 314 residues long: MEDKRNIQIIEWEHLDKKKFYVFGVAMTMMIRVSVYPFTLIRTRLQVQKGKSLYHGTFDAFVKILRADGVAGLYRGFLVNTFTLISGQCYVTTYELTRKFVADYSQSNTVKSLVAGGSASLVAQSITVPIDVVSQHLMMQRKGEKMGRFQVHGNLEGQGVIAFGQTKDIIRQILRADGLRGFYRGYVASLLTYIPNSAVWWPFYHFYAEQLSRLCPQECPHIVFQAISGPLAAATASILTNPMDVIRTRVQVEGKSSIVLTFRQLMAEEGPWGLMKGLSARIISATPSTIVIVVGYESLKKLSLRPELVDSRHW.

3 Solcar repeats span residues K18–F100, S107–Q210, and P220–L302. 6 helical membrane-spanning segments follow: residues F20–R42, A71–Y90, L113–V133, G185–W201, I222–L239, and L278–Y296.

Belongs to the mitochondrial carrier (TC 2.A.29) family. As to expression, highly expressed in brown adipose tissues compared with other metabolic organs.

The protein localises to the mitochondrion membrane. The catalysed reaction is L-valine(in) = L-valine(out). It catalyses the reaction L-leucine(in) = L-leucine(out). Mitochondrial solute transporter which transports branched-chain amino acid (BCAA; valine, leucine and isoleucine) into mitochondria in brown adipose tissue (BAT). BAT is involved in BCAA catabolism and actively utilizes BCAA in the mitochondria for thermogenesis. This chain is Solute carrier family 25 member 44, found in Mus musculus (Mouse).